Reading from the N-terminus, the 141-residue chain is Endoribonuclease YbeY (141 aa).

The Zn(2+) site is built by His107, His111, and Asp117.

Belongs to the endoribonuclease YbeY family. The cofactor is Zn(2+).

It localises to the cytoplasm. Single strand-specific metallo-endoribonuclease involved in late-stage 70S ribosome quality control and in maturation of the 3' terminus of the 16S rRNA. This Endomicrobium trichonymphae protein is Endoribonuclease YbeY.